The primary structure comprises 605 residues: Xylan O-acetyltransferase 7 (605 aa).

Residues 1–124 (MKKKKNGMGA…AKQPSPRRTP (124 aa)) lie on the Cytoplasmic side of the membrane. The disordered stretch occupies residues 86–126 (PCHLLPIQGQGQMQMQQRRKPPPAAAPVAAKQPSPRRTPGP). Residues 125–145 (GPLSFAGALLSLLVVATFLYI) traverse the membrane as a helical; Signal-anchor for type II membrane protein segment. Over 146–605 (NDHGNMMPPH…LYAHIVAHAA (460 aa)) the chain is Lumenal. 2 N-linked (GlcNAc...) asparagine glycosylation sites follow: asparagine 192 and asparagine 218. Intrachain disulfides connect cysteine 243-cysteine 296, cysteine 267-cysteine 332, cysteine 276-cysteine 584, and cysteine 499-cysteine 580. Positions 319-321 (GDS) match the GDS motif motif. The active-site Nucleophile is serine 321. N-linked (GlcNAc...) asparagine glycosylation is found at asparagine 351, asparagine 363, asparagine 471, and asparagine 508. Catalysis depends on aspartate 579, which acts as the Proton donor. The DXXH motif signature appears at 579–582 (DCIH). Catalysis depends on histidine 582, which acts as the Proton acceptor.

Belongs to the PC-esterase family. TBL subfamily. As to expression, expressed in roots, leaves and stems.

The protein resides in the golgi apparatus membrane. Functionally, xylan acetyltransferase required for 2-O- and 3-O-monoacetylation of xylosyl residues in xylan. Catalyzes the 2-O-acetylation of xylan, followed by nonenzymatic acetyl migration to the O-3 position, resulting in products that are monoacetylated at both O-2 and O-3 positions. This chain is Xylan O-acetyltransferase 7, found in Oryza sativa subsp. japonica (Rice).